A 235-amino-acid chain; its full sequence is Auracyanin-B (235 aa).

Low complexity predominate over residues 1-21; sequence MSWRGSGRSNFRSRSSSNGGS. Disordered regions lie at residues 1–27 and 64–107; these read MSWRGSGRSNFRSRSSSNGGSTFSGGS and ATPR…NVVN. Residues 1 to 56 form the signal peptide; the sequence is MSWRGSGRSNFRSRSSSNGGSTFSGGSAGGPPLIVMMGLAFGAGLIMLIVMIASNA. Positions 57–80 are excised as a propeptide; the sequence is TAGGFVAATPRPTATPRPTAAPAP. The span at 69–86 shows a compositional bias: pro residues; sequence TATPRPTAAPAPTQPPAA. Positions 87–100 are enriched in low complexity; that stretch reads QPTTAPATQAANAP. The region spanning 111 to 235 is the Plastocyanin-like domain; sequence AQTVEVRAAP…GMKGTLTVTP (125 aa). His-152, Cys-217, His-222, and Met-227 together coordinate Cu cation.

This sequence belongs to the multicopper oxidase family. Cu cation is required as a cofactor. Post-translationally, glycosylated.

Its subcellular location is the cell membrane. In terms of biological role, probably a soluble electron acceptor for the integral membrane protein electron transfer alternative complex III (ACIII). This is Auracyanin-B from Chloroflexus aurantiacus (strain ATCC 29366 / DSM 635 / J-10-fl).